We begin with the raw amino-acid sequence, 741 residues long: Isocitrate dehydrogenase [NADP] (741 aa).

2 residues coordinate NADP(+): N85 and S87. Positions 132, 135, 139, 145, and 255 each coordinate D-threo-isocitrate. Residue N135 participates in NADP(+) binding. D350 serves as a coordination point for Mn(2+). D-threo-isocitrate-binding residues include Y420 and R547. D548 contacts Mn(2+). 5 residues coordinate NADP(+): S585, H589, R600, D602, and R649.

The protein belongs to the monomeric-type IDH family. In terms of assembly, monomer. The cofactor is Mg(2+). Requires Mn(2+) as cofactor.

The protein localises to the cytoplasm. The catalysed reaction is D-threo-isocitrate + NADP(+) = 2-oxoglutarate + CO2 + NADPH. With respect to regulation, activity is inhibited in the presence of Ca(2+). Its function is as follows. Catalyzes the oxidative decarboxylation of isocitrate to 2-oxoglutarate and carbon dioxide with the concomitant reduction of NADP(+). The polypeptide is Isocitrate dehydrogenase [NADP] (Azotobacter vinelandii).